Reading from the N-terminus, the 204-residue chain is MEGSSRDLVEKFVSKKLSQNEACRKFSNNPNPMPYLMEPSTSERPGEGATQGIVEEEVLQALLEATEEFELRYQRAFSDLTSQLHITQDTAQQSFQQVMGELFRDGTNWGRIVAFFSFGRALCVESANKEMTDLLPRIVQWMVNYLEHTLQPWMQENGGWEAFVGLYGKNAAAQSRESQERFGRLLTIVMLTGVFALVCYMRRR.

The BH1 motif lies at E101–R120. Residues P152–Y167 carry the BH2 motif. A helical membrane pass occupies residues R181–V198.

The protein belongs to the Bcl-2 family.

The protein resides in the membrane. In terms of biological role, confers strong protection against cell death. This chain is Apoptosis regulator R11, found in Xenopus laevis (African clawed frog).